A 234-amino-acid chain; its full sequence is Superoxide dismutase [Mn], mitochondrial (234 aa).

Residues 1–34 (MFSIRSSSRVLLKASSATTRATLNAAASKTFTRS) constitute a mitochondrion transit peptide. Mn(2+) contacts are provided by His60, His108, Asp198, and His202.

It belongs to the iron/manganese superoxide dismutase family. In terms of assembly, homotetramer. It depends on Mn(2+) as a cofactor.

It is found in the mitochondrion matrix. The enzyme catalyses 2 superoxide + 2 H(+) = H2O2 + O2. Functionally, destroys superoxide anion radicals which are normally produced within the cells and which are toxic to biological systems. This is Superoxide dismutase [Mn], mitochondrial (SOD2) from Candida albicans (Yeast).